A 244-amino-acid chain; its full sequence is DNA repair protein RecO (244 aa).

It belongs to the RecO family.

Involved in DNA repair and RecF pathway recombination. The sequence is that of DNA repair protein RecO from Caldicellulosiruptor bescii (strain ATCC BAA-1888 / DSM 6725 / KCTC 15123 / Z-1320) (Anaerocellum thermophilum).